The primary structure comprises 473 residues: Siroheme synthase (473 aa).

Positions 1–222 (MNTQPHHSSP…GDESRADARL (222 aa)) are precorrin-2 dehydrogenase /sirohydrochlorin ferrochelatase. NAD(+)-binding positions include 37–38 (EI) and 58–59 (EK). The tract at residues 233 to 473 (GEVWLVGAGP…QVVRHRVVSP (241 aa)) is uroporphyrinogen-III C-methyltransferase. Position 242 (Pro-242) interacts with S-adenosyl-L-methionine. Residue Asp-265 is the Proton acceptor of the active site. Lys-287 functions as the Proton donor in the catalytic mechanism. Residues 318–320 (GGD), Ile-323, 348–349 (SA), Met-401, and Gly-430 contribute to the S-adenosyl-L-methionine site.

It in the N-terminal section; belongs to the precorrin-2 dehydrogenase / sirohydrochlorin ferrochelatase family. The protein in the C-terminal section; belongs to the precorrin methyltransferase family.

The enzyme catalyses uroporphyrinogen III + 2 S-adenosyl-L-methionine = precorrin-2 + 2 S-adenosyl-L-homocysteine + H(+). The catalysed reaction is precorrin-2 + NAD(+) = sirohydrochlorin + NADH + 2 H(+). It carries out the reaction siroheme + 2 H(+) = sirohydrochlorin + Fe(2+). Its pathway is cofactor biosynthesis; adenosylcobalamin biosynthesis; precorrin-2 from uroporphyrinogen III: step 1/1. It functions in the pathway cofactor biosynthesis; adenosylcobalamin biosynthesis; sirohydrochlorin from precorrin-2: step 1/1. The protein operates within porphyrin-containing compound metabolism; siroheme biosynthesis; precorrin-2 from uroporphyrinogen III: step 1/1. It participates in porphyrin-containing compound metabolism; siroheme biosynthesis; siroheme from sirohydrochlorin: step 1/1. Its pathway is porphyrin-containing compound metabolism; siroheme biosynthesis; sirohydrochlorin from precorrin-2: step 1/1. Functionally, multifunctional enzyme that catalyzes the SAM-dependent methylations of uroporphyrinogen III at position C-2 and C-7 to form precorrin-2 via precorrin-1. Then it catalyzes the NAD-dependent ring dehydrogenation of precorrin-2 to yield sirohydrochlorin. Finally, it catalyzes the ferrochelation of sirohydrochlorin to yield siroheme. This is Siroheme synthase from Gluconobacter oxydans (strain 621H) (Gluconobacter suboxydans).